The chain runs to 219 residues: Dehydration-responsive element-binding protein 1E (219 aa).

Residues 1–19 (MEWAYYGSGYSSSGTPSPV) show a composition bias toward low complexity. A disordered region spans residues 1–44 (MEWAYYGSGYSSSGTPSPVGGDGDEDSYMTVSSAPPKRRAGRTK). Residues 52–109 (VYKGVRSRNPGRWVCEVREPHGKQRIWLGTFETAEMAARAHDVAAMALRGRAACLNFA) constitute a DNA-binding region (AP2/ERF).

The protein belongs to the AP2/ERF transcription factor family. ERF subfamily.

It is found in the nucleus. In terms of biological role, transcriptional activator that binds specifically to the DNA sequence 5'-[AG]CCGAC-3'. Binding to the C-repeat/DRE element mediates high salinity- and dehydration-inducible transcription. The protein is Dehydration-responsive element-binding protein 1E (DREB1E) of Oryza sativa subsp. indica (Rice).